The following is a 121-amino-acid chain: UPF0145 protein SGR_4080 (121 aa).

It belongs to the UPF0145 family.

The sequence is that of UPF0145 protein SGR_4080 from Streptomyces griseus subsp. griseus (strain JCM 4626 / CBS 651.72 / NBRC 13350 / KCC S-0626 / ISP 5235).